The chain runs to 295 residues: SPX domain-containing protein 1 (295 aa).

The region spanning 1–166 (MKFGKSLSSQ…GALIRLPFIQ (166 aa)) is the SPX domain. Residues 197-227 (NELPVSSEDGRGDSTNEDKPSNPSSSLVNGG) are disordered. A compositionally biased stretch (basic and acidic residues) spans 204-216 (EDGRGDSTNEDKP).

In terms of assembly, interacts (via SPX domain) with PHR2 (via C-terminus). Interacts with RLI1 in the nucleus to prevents its positive regulation of leaf inclination during phosphate (Pi) starvation.

The protein localises to the nucleus. Involved in plant adaptation to phosphate (Pi) starvation. Inhibits PHR2 DNA-binding activity via a Pi-dependent protein interaction. Suppresses the regulation on expression of PT2 by PHR2 and accumulation of shoot Pi. Optimizes growth under phosphate-limited conditions through a negative feedback loop of the PSI (phosphate starvation-induced) signaling pathway. Regulates the expression of SPX2, SPX3 and SPX5. May be an important link between signal transduction pathways related to phosphate starvation and cold stress. Together with SPX2, plays a negative role in the regulation of leaf inclination by preventing RLI1 transcription factor activity in Pi depleted conditions. This Oryza sativa subsp. indica (Rice) protein is SPX domain-containing protein 1.